The chain runs to 275 residues: Light-independent protochlorophyllide reductase iron-sulfur ATP-binding protein (275 aa).

ATP is bound by residues 12–17 (GIGKST) and lysine 41. Serine 16 provides a ligand contact to Mg(2+). Positions 97 and 131 each coordinate [4Fe-4S] cluster. 182–183 (NR) contacts ATP.

Belongs to the NifH/BchL/ChlL family. Homodimer. Protochlorophyllide reductase is composed of three subunits; BchL, BchN and BchB. Requires [4Fe-4S] cluster as cofactor.

The catalysed reaction is chlorophyllide a + oxidized 2[4Fe-4S]-[ferredoxin] + 2 ADP + 2 phosphate = protochlorophyllide a + reduced 2[4Fe-4S]-[ferredoxin] + 2 ATP + 2 H2O. It participates in porphyrin-containing compound metabolism; bacteriochlorophyll biosynthesis (light-independent). In terms of biological role, component of the dark-operative protochlorophyllide reductase (DPOR) that uses Mg-ATP and reduced ferredoxin to reduce ring D of protochlorophyllide (Pchlide) to form chlorophyllide a (Chlide). This reaction is light-independent. The L component serves as a unique electron donor to the NB-component of the complex, and binds Mg-ATP. The sequence is that of Light-independent protochlorophyllide reductase iron-sulfur ATP-binding protein from Chlorobium phaeobacteroides (strain BS1).